Consider the following 521-residue polypeptide: GRAS family protein RAD1 (521 aa).

A GRAS domain is found at 137–520 (DGSCADGMRL…KPIVAVSCWK (384 aa)). Residues 144 to 212 (MRLVQLLIAC…PIGNNSAGSD (69 aa)) are leucine repeat I (LRI). A VHIID region spans residues 231–301 (FKLVYENCPH…HRVRRLRITA (71 aa)). Residues 262-266 (LHVVD) carry the VHIID motif. Positions 311-343 (VIGEELSIYAKNLGIHLEFSIVEKNLENLKPKD) are leucine repeat II (LRII). A PFYRE region spans residues 352–443 (LVVNSILQLH…QFYFAEEIKN (92 aa)). The tract at residues 446 to 520 (SCEGPLRMER…KPIVAVSCWK (75 aa)) is SAW.

Belongs to the GRAS family. As to quaternary structure, interacts with RAM1. Interacts with NSP2.

It is found in the nucleus. Transcription factor acting as a regulator of arbuscular mycorrhiza (AM)-related genes (e.g. STR). Required for the morphogenesis of arbuscules upon symbiosis with AM fungi (e.g. Glomus versiforme). Also involved in restricting mycorrhizal colonization of the root meristem. The chain is GRAS family protein RAD1 from Medicago truncatula (Barrel medic).